A 131-amino-acid polypeptide reads, in one-letter code: Profilin-1 (131 aa).

A disulfide bridge links Cys13 with Cys115. The Involved in PIP2 interaction motif lies at 81–97; it reads AVIRGKKGSGGITVKKT. At Thr111 the chain carries Phosphothreonine.

The protein belongs to the profilin family. As to quaternary structure, multimer. Occurs in many kinds of cells as a complex with monomeric actin in a 1:1 ratio. Post-translationally, phosphorylated by MAP kinases. As to expression, pollen specific.

The protein resides in the cytoplasm. It is found in the cytoskeleton. Functionally, binds to actin and affects the structure of the cytoskeleton. At high concentrations, profilin prevents the polymerization of actin, whereas it enhances it at low concentrations. By binding to PIP2, it inhibits the formation of IP3 and DG. The chain is Profilin-1 (PRO1) from Zea mays (Maize).